Reading from the N-terminus, the 382-residue chain is V-type proton ATPase subunit C 1 (382 aa).

An N-acetylthreonine modification is found at threonine 2.

The protein belongs to the V-ATPase C subunit family. In terms of assembly, V-ATPase is a heteromultimeric enzyme made up of two complexes: the ATP-hydrolytic V1 complex and the proton translocation V0 complex. The V1 complex consists of three catalytic AB heterodimers that form a heterohexamer, three peripheral stalks each consisting of EG heterodimers, one central rotor including subunits D and F, and the regulatory subunits C and H. The proton translocation complex V0 consists of the proton transport subunit a, a ring of proteolipid subunits c9c'', rotary subunit d, subunits e and f, and two accessory subunits.

Subunit of the V1 complex of vacuolar(H+)-ATPase (V-ATPase), a multisubunit enzyme composed of a peripheral complex (V1) that hydrolyzes ATP and a membrane integral complex (V0) that translocates protons. V-ATPase is responsible for acidifying and maintaining the pH of intracellular compartments and in some cell types, is targeted to the plasma membrane, where it is responsible for acidifying the extracellular environment. Subunit C is necessary for the assembly of the catalytic sector of the enzyme and is likely to have a specific function in its catalytic activity. The polypeptide is V-type proton ATPase subunit C 1 (atp6v1c1) (Xenopus laevis (African clawed frog)).